The following is a 443-amino-acid chain: MESLASLYKNHIATLQERTRDALARFKLDALLIHSGELFNVFLDDHPYPFKVNPQFKAWVPVTQVPNCWLLVDGVNKPKLWFYLPVDYWHNVEPLPTSFWTEDVEVIALPKADGIGSLLPAARGNIGYIGPVPERALQLGIEASNINPKGVLDYLHYYRSFKTEYELACMREAQKMAVNGHRAAEEAFRSGMSEFDINIAYLTATGHRDTDVPYSNIVALNEHAAVLHYTKLDHQAPEEMYSFLLDAGAEYNGYAADLTRTWSAKSDNDYAQLVKDVNDEQLALIATMKAGVSYVDYHIQFHQRIAKLLRKHQIITDMSEEAMVENDLTGPFMPHGIGHPLGLQVHDVAGFMQDDSGTHLAAPAKYPYLRCTRILQPGMVLTIEPGIYFIESLLAPWREGQFSKHFNWQKIEALKPFGGIRIEDNVVIHENNVENMTRDLKLA.

Residues Asp-246, Asp-257, His-339, Glu-384, and Glu-423 each coordinate Mn(2+).

Belongs to the peptidase M24B family. Bacterial-type prolidase subfamily. It depends on Mn(2+) as a cofactor.

It catalyses the reaction Xaa-L-Pro dipeptide + H2O = an L-alpha-amino acid + L-proline. Functionally, splits dipeptides with a prolyl residue in the C-terminal position. This is Xaa-Pro dipeptidase from Escherichia coli O8 (strain IAI1).